Consider the following 341-residue polypeptide: Bis(monoacylglycero)phosphate synthase CLN5 (341 aa).

Residues 1–13 are Cytoplasmic-facing; sequence MLRGGPCGAHWRP. A helical; Signal-anchor for type II membrane protein transmembrane segment spans residues 14-30; the sequence is ALALALLGLATILGASP. Residues 31-341 lie on the Lumenal side of the membrane; that stretch reads TSGQRWPVPY…PTRHTTFTDL (311 aa). Intrachain disulfides connect cysteine 53-cysteine 142 and cysteine 60-cysteine 148. Catalysis depends on histidine 100, which acts as the Proton acceptor. N-linked (GlcNAc...) asparagine glycosylation is found at asparagine 113, asparagine 126, asparagine 161, and asparagine 186. Cysteine 214 (nucleophile; Acyl-thioester intermediate) is an active-site residue. N-linked (GlcNAc...) asparagine glycans are attached at residues asparagine 238, asparagine 254, and asparagine 264. The segment at 287-326 is membrane-anchoring; the sequence is FLMNFLKIFDTVIIHRQFYLFYNFEYWFLPMKPPFVKITY.

The protein belongs to the CLN5 family. Multimer. Interacts with PPT1, TPP1, CLN3, CLN6, CLN8, ATP5F1A and ATP5F1B. Interacts with SORT1, RAB5A and RAB7A. In terms of processing, N-glycosylated with both high mannose and complex type sugars. Glycosylation is important for proper folding and trafficking to the lysosomes. The type II membrane signal anchor is proteolytically cleaved to produce a mature form that is transported to the lysosomes (Bis(monoacylglycero)phosphate synthase CLN5, secreted form). Post-translationally, can undergo proteolytic cleavage at the C-terminus, probably by a cysteine protease and may involve the removal of approximately 10-15 residues from the C-terminal end. Heart, kidney, liver, spleen, muscle and rectum (at protein level).

It localises to the lysosome. The protein localises to the membrane. It carries out the reaction S-hexadecanoyl-L-cysteinyl-[protein] + H2O = L-cysteinyl-[protein] + hexadecanoate + H(+). The catalysed reaction is 2 1-acyl-sn-glycero-3-phospho-(1'-sn-glycerol) = 1-acyl-sn-glycero-3-phospho-(3'-acyl-sn-1'-glycerol) + sn-glycero-3-phospho-(1'-sn-glycerol). The enzyme catalyses 2 1-(9Z-octadecenoyl)-sn-glycero-3-phospho-(1'-sn-glycerol) = 1-(9Z-octadecenoyl)-sn-glycero-3-phospho-(3'-(9Z-octadecenoyl)-1'-sn-glycerol) + sn-glycero-3-phospho-(1'-sn-glycerol). It catalyses the reaction 2 1-octadecanoyl-sn-glycero-3-phospho-(1'-sn-glycerol) = 1-octadecanoyl-sn-glycero-3-phospho-(3'-octadecanoyl-1'-sn-glycerol) + sn-glycero-3-phospho-(1'-sn-glycerol). It carries out the reaction 2 1-hexadecanoyl-sn-glycero-3-phospho-(1'-sn-glycerol) = 1-hexadecanoyl-sn-glycero-3-phospho-(3'-hexadecanoyl-1'-sn-glycerol) + sn-glycero-3-phospho-(1'-sn-glycerol). The catalysed reaction is 2 1-tetradecanoyl-sn-glycero-3-phospho-(1'-sn-glycerol) = 1-tetradecanoyl-sn-glycero-3-phospho-(3'-tetradecanoyl-1'-sn-glycerol) + sn-glycero-3-phospho-(1'-sn-glycerol). Its function is as follows. Catalyzes the synthesis of bis(monoacylglycero)phosphate (BMP) via transacylation of 2 molecules of lysophosphatidylglycerol (LPG). BMP also known as lysobisphosphatidic acid plays a key role in the formation of intraluminal vesicles and in maintaining intracellular cholesterol homeostasis. Can use only LPG as the exclusive lysophospholipid acyl donor for base exchange and displays BMP synthase activity towards various LPGs (LPG 14:0, LPG 16:0, LPG 18:0, LPG 18:1) with a higher preference for longer chain lengths. Plays a role in influencing the retrograde trafficking of lysosomal sorting receptors SORT1 and IGF2R from the endosomes to the trans-Golgi network by controlling the recruitment of retromer complex to the endosomal membrane. Regulates the localization and activation of RAB7A which is required to recruit the retromer complex to the endosomal membrane. In terms of biological role, exhibits palmitoyl protein thioesterase (S-depalmitoylation) activity in vitro and most likely plays a role in protein S-depalmitoylation. The protein is Bis(monoacylglycero)phosphate synthase CLN5 (Cln5) of Mus musculus (Mouse).